A 643-amino-acid polypeptide reads, in one-letter code: Threonine--tRNA ligase (643 aa).

Positions 1–61 (MVAISLPDGS…TTDASVSLIT (61 aa)) constitute a TGS domain. The segment at 243-534 (DHRRVGQEMD…LIENCAGRFP (292 aa)) is catalytic. Zn(2+) is bound by residues Cys-334, His-385, and His-511.

This sequence belongs to the class-II aminoacyl-tRNA synthetase family. Homodimer. Requires Zn(2+) as cofactor.

The protein resides in the cytoplasm. It carries out the reaction tRNA(Thr) + L-threonine + ATP = L-threonyl-tRNA(Thr) + AMP + diphosphate + H(+). Its function is as follows. Catalyzes the attachment of threonine to tRNA(Thr) in a two-step reaction: L-threonine is first activated by ATP to form Thr-AMP and then transferred to the acceptor end of tRNA(Thr). Also edits incorrectly charged L-seryl-tRNA(Thr). This is Threonine--tRNA ligase from Rhodospirillum rubrum (strain ATCC 11170 / ATH 1.1.1 / DSM 467 / LMG 4362 / NCIMB 8255 / S1).